Reading from the N-terminus, the 478-residue chain is 3-isopropylmalate dehydratase large subunit (478 aa).

[4Fe-4S] cluster is bound by residues Cys-359, Cys-417, and Cys-420.

The protein belongs to the aconitase/IPM isomerase family. LeuC type 1 subfamily. Heterodimer of LeuC and LeuD. It depends on [4Fe-4S] cluster as a cofactor.

It catalyses the reaction (2R,3S)-3-isopropylmalate = (2S)-2-isopropylmalate. It participates in amino-acid biosynthesis; L-leucine biosynthesis; L-leucine from 3-methyl-2-oxobutanoate: step 2/4. In terms of biological role, catalyzes the isomerization between 2-isopropylmalate and 3-isopropylmalate, via the formation of 2-isopropylmaleate. In Anaeromyxobacter sp. (strain Fw109-5), this protein is 3-isopropylmalate dehydratase large subunit.